The following is a 111-amino-acid chain: Microtubule nucleation factor SSNA1 (111 aa).

The stretch at 6–71 forms a coiled coil; sequence QALQNHNNEL…ARKTETKNEY (66 aa).

The protein belongs to the SSNA1 family. In terms of assembly, self-assembles into fibrils in a head-to-tail fashion.

Its subcellular location is the cytoplasm. It localises to the cytoskeleton. The protein localises to the flagellum basal body. It is found in the flagellum axoneme. Its function is as follows. Microtubule-binding protein which stabilizes dynamic microtubules by slowing growth and shrinkage at both plus and minus ends and serves as a sensor of microtubule damage. Induces microtubule branching which is mediated by the formation of long SSNA1 fibrils which guide microtubule protofilaments to split apart from the mother microtubule and form daughter microtubules. Required for cell division. This Chlamydomonas reinhardtii (Chlamydomonas smithii) protein is Microtubule nucleation factor SSNA1.